The primary structure comprises 291 residues: Elongation factor Ts (291 aa).

The involved in Mg(2+) ion dislocation from EF-Tu stretch occupies residues 79–82; sequence TDFV.

The protein belongs to the EF-Ts family.

Its subcellular location is the cytoplasm. Functionally, associates with the EF-Tu.GDP complex and induces the exchange of GDP to GTP. It remains bound to the aminoacyl-tRNA.EF-Tu.GTP complex up to the GTP hydrolysis stage on the ribosome. The sequence is that of Elongation factor Ts from Stenotrophomonas maltophilia (strain K279a).